The primary structure comprises 639 residues: tRNA (uracil(54)-C(5))-methyltransferase (639 aa).

The disordered stretch occupies residues Val-78–Ala-113. Ser-92 and Ser-93 each carry phosphoserine. Residues Arg-101 to Ala-113 show a composition bias toward basic residues. The TRAM domain occupies Leu-163 to Asp-228. S-adenosyl-L-methionine contacts are provided by Gln-461, Tyr-496, Glu-517, and Asp-564. Cys-591 functions as the Nucleophile in the catalytic mechanism. Glu-631 (proton acceptor) is an active-site residue.

The protein belongs to the class I-like SAM-binding methyltransferase superfamily. RNA M5U methyltransferase family.

It carries out the reaction uridine(54) in tRNA + S-adenosyl-L-methionine = 5-methyluridine(54) in tRNA + S-adenosyl-L-homocysteine + H(+). Catalyzes the formation of 5-methyl-uridine at position 54 (m5U54) in all tRNA. May also have a role in tRNA stabilization or maturation. The protein is tRNA (uracil(54)-C(5))-methyltransferase (TRM2) of Saccharomyces cerevisiae (strain ATCC 204508 / S288c) (Baker's yeast).